The following is a 555-amino-acid chain: Formate--tetrahydrofolate ligase (555 aa).

T65–S72 contributes to the ATP binding site.

This sequence belongs to the formate--tetrahydrofolate ligase family.

It carries out the reaction (6S)-5,6,7,8-tetrahydrofolate + formate + ATP = (6R)-10-formyltetrahydrofolate + ADP + phosphate. The protein operates within one-carbon metabolism; tetrahydrofolate interconversion. The sequence is that of Formate--tetrahydrofolate ligase from Staphylococcus aureus (strain Mu3 / ATCC 700698).